The chain runs to 193 residues: Peptidyl-tRNA hydrolase (193 aa).

A tRNA-binding site is contributed by tyrosine 16. Catalysis depends on histidine 21, which acts as the Proton acceptor. Positions 66, 68, and 114 each coordinate tRNA.

It belongs to the PTH family. As to quaternary structure, monomer.

It is found in the cytoplasm. It catalyses the reaction an N-acyl-L-alpha-aminoacyl-tRNA + H2O = an N-acyl-L-amino acid + a tRNA + H(+). Hydrolyzes ribosome-free peptidyl-tRNAs (with 1 or more amino acids incorporated), which drop off the ribosome during protein synthesis, or as a result of ribosome stalling. Functionally, catalyzes the release of premature peptidyl moieties from peptidyl-tRNA molecules trapped in stalled 50S ribosomal subunits, and thus maintains levels of free tRNAs and 50S ribosomes. This is Peptidyl-tRNA hydrolase from Geobacter sulfurreducens (strain ATCC 51573 / DSM 12127 / PCA).